A 182-amino-acid polypeptide reads, in one-letter code: Fimbrial subunit type 1 (182 aa).

The signal sequence occupies residues 1-23; the sequence is MKIKTLAIVVLSALSLSSAAALA. A disulfide bond links cysteine 44 and cysteine 84.

It belongs to the fimbrial protein family.

Its subcellular location is the fimbrium. In Klebsiella pneumoniae, this protein is Fimbrial subunit type 1.